The following is a 327-amino-acid chain: MPRSPDSYHDPVLLHECVDALVRGPGLYVDGTLGGGGHSMAILRALESGGWLEGSLLVGIDQDDEALHEAGSRLAAYPGRAVAVKGNFQDIARLASREAVQKGLEPRARAILLDLGVSSRQIDRAERGFSYMRTGPLDMRMDSSASTTAADILNDADERELAAIFFRYGEEPRSRAIARAVIAARMKHGPLSSTEDLADIVRSVVHGRQPSIRSLSRVFQALRIAVNRELDVLQRVLEDGVSVLDEGGRIAVISYHSLEDRMVKQYFAAQSKCDWGPKGVGLREPLSRGTLVPVTRKAVVASEDEVRVNPRSRSAKLRVAEKTGGVQ.

S-adenosyl-L-methionine-binding positions include 36-38 (GGH), D61, F88, D114, and Q121.

This sequence belongs to the methyltransferase superfamily. RsmH family.

Its subcellular location is the cytoplasm. It catalyses the reaction cytidine(1402) in 16S rRNA + S-adenosyl-L-methionine = N(4)-methylcytidine(1402) in 16S rRNA + S-adenosyl-L-homocysteine + H(+). In terms of biological role, specifically methylates the N4 position of cytidine in position 1402 (C1402) of 16S rRNA. The protein is Ribosomal RNA small subunit methyltransferase H of Chlorobium luteolum (strain DSM 273 / BCRC 81028 / 2530) (Pelodictyon luteolum).